Consider the following 214-residue polypeptide: Riboflavin kinase (214 aa).

Residues 1–26 are disordered; that stretch reads MRPDGPRDPVVGPDSGPEPPYPVRLS. Mg(2+) is bound by residues threonine 44 and asparagine 46. Glutamate 112 functions as the Nucleophile in the catalytic mechanism.

Belongs to the flavokinase family. It depends on Zn(2+) as a cofactor. Mg(2+) is required as a cofactor.

It catalyses the reaction riboflavin + ATP = FMN + ADP + H(+). It functions in the pathway cofactor biosynthesis; FMN biosynthesis; FMN from riboflavin (ATP route): step 1/1. Catalyzes the phosphorylation of riboflavin (vitamin B2) to form flavin mononucleotide (FMN) coenzyme. The chain is Riboflavin kinase (fmn1) from Aspergillus clavatus (strain ATCC 1007 / CBS 513.65 / DSM 816 / NCTC 3887 / NRRL 1 / QM 1276 / 107).